The primary structure comprises 371 residues: Cytochrome b (371 aa).

The next 4 membrane-spanning stretches (helical) occupy residues 25-45 (FGSM…FLAI), 69-90 (WIMQ…YIHI), 105-125 (WLSG…GYVL), and 170-190 (FFAL…IHII). Heme b-binding residues include histidine 75 and histidine 89. Heme b is bound by residues histidine 174 and histidine 188. Histidine 193 lines the a ubiquinone pocket. The next 4 helical transmembrane spans lie at 218 to 238 (YKDL…LSFS), 280 to 300 (LGGT…PFTH), 312 to 332 (LSQT…WTAT), and 339 to 358 (FITI…IMNP).

This sequence belongs to the cytochrome b family. The cytochrome bc1 complex contains 3 respiratory subunits (MT-CYB, CYC1 and UQCRFS1), 2 core proteins (UQCRC1 and UQCRC2) and probably 6 low-molecular weight proteins. The cofactor is heme b.

The protein resides in the mitochondrion inner membrane. Functionally, component of the ubiquinol-cytochrome c reductase complex (complex III or cytochrome b-c1 complex) that is part of the mitochondrial respiratory chain. The b-c1 complex mediates electron transfer from ubiquinol to cytochrome c. Contributes to the generation of a proton gradient across the mitochondrial membrane that is then used for ATP synthesis. The protein is Cytochrome b (MT-CYB) of Micrurus fulvius (Eastern coral snake).